Here is a 605-residue protein sequence, read N- to C-terminus: Protein DENND6A (605 aa).

The disordered stretch occupies residues Met1 to Ala20. The 180-residue stretch at His60 to Lys239 folds into the uDENN domain. At Ser124 the chain carries Phosphoserine. The 126-residue stretch at Glu265–Lys390 folds into the cDENN domain. A dDENN domain is found at Leu392 to Lys525. N6-methyllysine is present on Lys507.

Belongs to the DENND6 family.

It is found in the recycling endosome. Its subcellular location is the cytoplasm. Its function is as follows. Guanine nucleotide exchange factor (GEF) for RAB14. Component of an endocytic recycling pathway that is required for the control of ADAM10 transport, shedding of N-cadherin/CDH2 by ADAM9 or ADAM10 and regulation of cell-cell junctions. Required for RAB14 recruitment to recycling endosomes. This chain is Protein DENND6A (Dennd6a), found in Mus musculus (Mouse).